We begin with the raw amino-acid sequence, 371 residues long: Sensor histidine kinase YvfT (371 aa).

Over 1 to 10 (MKKAISIFPK) the chain is Extracellular. Residues 11 to 31 (EFGFFPYIFLVYTIMPFLSLL) form a helical membrane-spanning segment. The Cytoplasmic portion of the chain corresponds to 32–38 (KESGVKQ). The chain crosses the membrane as a helical span at residues 39–59 (GIGYGMLLLFVAAYRQLFCSV). Residues 60–71 (GKASFTYWLIVQ) lie on the Extracellular side of the membrane. A helical transmembrane segment spans residues 72 to 92 (MAVILMYSVFYNITYIYLGFF). At 93 to 109 (PANFVGYYKEKTNFNRA) the chain is on the cytoplasmic side. A helical transmembrane segment spans residues 110–130 (FCALIFILLFPCLYQFIANSV). Residues 131 to 135 (SLREL) are Extracellular-facing. A helical membrane pass occupies residues 136–156 (FSVLPFLVIMLISPFGIRSMF). At 157 to 371 (RRIELEAKLA…LTIPLIKKAE (215 aa)) the chain is on the cytoplasmic side. The 182-residue stretch at 187–368 (DLHDTLGHTL…VVALTIPLIK (182 aa)) folds into the Histidine kinase domain. Residue His-189 is modified to Phosphohistidine; by autocatalysis.

The protein resides in the cell membrane. It carries out the reaction ATP + protein L-histidine = ADP + protein N-phospho-L-histidine.. Its function is as follows. Member of the two-component regulatory system YvfT/YvfU. Probably activates YvfU by phosphorylation. The protein is Sensor histidine kinase YvfT (yvfT) of Bacillus subtilis (strain 168).